A 529-amino-acid chain; its full sequence is Ectonucleoside triphosphate diphosphohydrolase 3 (529 aa).

Residues 1–22 (MFTVLTRQPCEQAGLKALYRTP) lie on the Cytoplasmic side of the membrane. Residues 23–43 (TIIALVVLLVSIVVLVSITVI) traverse the membrane as a helical segment. Residues 44-485 (QIHKQEVLPP…PLIRLPIEPP (442 aa)) lie on the Extracellular side of the membrane. N81 carries an N-linked (GlcNAc...) asparagine glycan. Cysteines 92 and 116 form a disulfide. An N-linked (GlcNAc...) asparagine glycan is attached at N149. Residue E182 is the Proton acceptor of the active site. 222-226 (GASTQ) provides a ligand contact to ATP. Residue N238 is glycosylated (N-linked (GlcNAc...) asparagine). Intrachain disulfides connect C261/C308, C289/C334, and C347/C353. N381, N392, N402, and N454 each carry an N-linked (GlcNAc...) asparagine glycan. C399 and C422 are disulfide-bonded. A helical transmembrane segment spans residues 486–506 (VFVGTLAFFTAAALLCLAFLA). The Cytoplasmic segment spans residues 507 to 529 (YLCSATRRKRHSEHAFDHAVDSD).

It belongs to the GDA1/CD39 NTPase family. It depends on Ca(2+) as a cofactor. The cofactor is Mg(2+). Expressed in adult brain, pancreas, spleen and prostate. Moderate or low expression is seen in most tissues. Not expressed in liver and peripheral blood leukocytes.

It localises to the cell membrane. The enzyme catalyses a ribonucleoside 5'-triphosphate + 2 H2O = a ribonucleoside 5'-phosphate + 2 phosphate + 2 H(+). Has a threefold preference for the hydrolysis of ATP over ADP. In Homo sapiens (Human), this protein is Ectonucleoside triphosphate diphosphohydrolase 3 (ENTPD3).